The following is a 175-amino-acid chain: Shikimate kinase (175 aa).

Residue 16–21 (GAGKST) coordinates ATP. S20 contacts Mg(2+). Residues D38, R62, and G84 each coordinate substrate. R122 lines the ATP pocket. R141 provides a ligand contact to substrate.

This sequence belongs to the shikimate kinase family. In terms of assembly, monomer. Mg(2+) is required as a cofactor.

The protein resides in the cytoplasm. The catalysed reaction is shikimate + ATP = 3-phosphoshikimate + ADP + H(+). Its pathway is metabolic intermediate biosynthesis; chorismate biosynthesis; chorismate from D-erythrose 4-phosphate and phosphoenolpyruvate: step 5/7. Catalyzes the specific phosphorylation of the 3-hydroxyl group of shikimic acid using ATP as a cosubstrate. In Legionella pneumophila (strain Paris), this protein is Shikimate kinase.